The sequence spans 291 residues: tRNA U34 carboxymethyltransferase (291 aa).

Carboxy-S-adenosyl-L-methionine contacts are provided by residues K61, W75, K80, G100, 122–124 (DPS), 149–150 (VE), Y169, and R284.

It belongs to the class I-like SAM-binding methyltransferase superfamily. CmoB family. Homotetramer.

The catalysed reaction is carboxy-S-adenosyl-L-methionine + 5-hydroxyuridine(34) in tRNA = 5-carboxymethoxyuridine(34) in tRNA + S-adenosyl-L-homocysteine + H(+). Functionally, catalyzes carboxymethyl transfer from carboxy-S-adenosyl-L-methionine (Cx-SAM) to 5-hydroxyuridine (ho5U) to form 5-carboxymethoxyuridine (cmo5U) at position 34 in tRNAs. The polypeptide is tRNA U34 carboxymethyltransferase (Campylobacter jejuni (strain RM1221)).